A 257-amino-acid polypeptide reads, in one-letter code: tRNA pseudouridine synthase A (257 aa).

Residue D53 is the Nucleophile of the active site. A substrate-binding site is contributed by Y111.

This sequence belongs to the tRNA pseudouridine synthase TruA family. In terms of assembly, homodimer.

It catalyses the reaction uridine(38/39/40) in tRNA = pseudouridine(38/39/40) in tRNA. Formation of pseudouridine at positions 38, 39 and 40 in the anticodon stem and loop of transfer RNAs. This is tRNA pseudouridine synthase A from Xylella fastidiosa (strain M23).